The primary structure comprises 225 residues: NAD(P)H-quinone oxidoreductase subunit K, chloroplastic (225 aa).

The [4Fe-4S] cluster site is built by Cys43, Cys44, Cys108, and Cys139.

Belongs to the complex I 20 kDa subunit family. In terms of assembly, NDH is composed of at least 16 different subunits, 5 of which are encoded in the nucleus. [4Fe-4S] cluster serves as cofactor.

The protein resides in the plastid. The protein localises to the chloroplast thylakoid membrane. The catalysed reaction is a plastoquinone + NADH + (n+1) H(+)(in) = a plastoquinol + NAD(+) + n H(+)(out). The enzyme catalyses a plastoquinone + NADPH + (n+1) H(+)(in) = a plastoquinol + NADP(+) + n H(+)(out). Functionally, NDH shuttles electrons from NAD(P)H:plastoquinone, via FMN and iron-sulfur (Fe-S) centers, to quinones in the photosynthetic chain and possibly in a chloroplast respiratory chain. The immediate electron acceptor for the enzyme in this species is believed to be plastoquinone. Couples the redox reaction to proton translocation, and thus conserves the redox energy in a proton gradient. This chain is NAD(P)H-quinone oxidoreductase subunit K, chloroplastic, found in Lobularia maritima (Sweet alyssum).